The primary structure comprises 460 residues: Allantoinase (460 aa).

Histidine 70, histidine 72, lysine 157, histidine 193, histidine 250, and aspartate 323 together coordinate Zn(2+). Lysine 157 is subject to N6-carboxylysine.

This sequence belongs to the metallo-dependent hydrolases superfamily. Allantoinase family. Homotetramer. The cofactor is Zn(2+). Carboxylation allows a single lysine to coordinate two zinc ions.

The enzyme catalyses (S)-allantoin + H2O = allantoate + H(+). The protein operates within nitrogen metabolism; (S)-allantoin degradation; allantoate from (S)-allantoin: step 1/1. Functionally, catalyzes the conversion of allantoin (5-ureidohydantoin) to allantoic acid by hydrolytic cleavage of the five-member hydantoin ring. Involved in the utilization of purines as secondary nitrogen sources, when primary sources are limiting. This chain is Allantoinase (DAL1), found in Saccharomyces cerevisiae (strain ATCC 204508 / S288c) (Baker's yeast).